The following is a 441-amino-acid chain: Ribosomal protein uS12 methylthiotransferase RimO (441 aa).

The MTTase N-terminal domain occupies 8–118 (PKIGFVSLGC…VLEHVHHYSP (111 aa)). [4Fe-4S] cluster contacts are provided by C17, C53, C82, C150, C154, and C157. One can recognise a Radical SAM core domain in the interval 136–373 (LTPRHYAYLK…MQLQQQISAE (238 aa)). Residues 376-441 (QEKVGREILV…DEYDLWGTRV (66 aa)) form the TRAM domain.

This sequence belongs to the methylthiotransferase family. RimO subfamily. The cofactor is [4Fe-4S] cluster.

The protein resides in the cytoplasm. It catalyses the reaction L-aspartate(89)-[ribosomal protein uS12]-hydrogen + (sulfur carrier)-SH + AH2 + 2 S-adenosyl-L-methionine = 3-methylsulfanyl-L-aspartate(89)-[ribosomal protein uS12]-hydrogen + (sulfur carrier)-H + 5'-deoxyadenosine + L-methionine + A + S-adenosyl-L-homocysteine + 2 H(+). Its function is as follows. Catalyzes the methylthiolation of an aspartic acid residue of ribosomal protein uS12. The protein is Ribosomal protein uS12 methylthiotransferase RimO of Klebsiella pneumoniae (strain 342).